The primary structure comprises 85 residues: MKKILFSMFYSILVGEEPDSVFLKKEGKQNQVKMIWVAPSSCAKDLTISEGTGATFLFNFHSRVSYLFPRPFLRPRNMKWTNSFS.

This sequence belongs to the ycf76 family.

The protein resides in the plastid. It is found in the chloroplast. This is an uncharacterized protein from Oryza sativa subsp. japonica (Rice).